Here is a 455-residue protein sequence, read N- to C-terminus: Golgi pH regulator (455 aa).

5 helical membrane-spanning segments follow: residues 5 to 25 (IDSS…WLFF), 46 to 66 (VTFA…LGVL), 79 to 99 (LCVI…YFIV), 114 to 134 (CLLW…FPIL), and 150 to 170 (VGVI…VNCP). Asn-180 is a glycosylation site (N-linked (GlcNAc...) asparagine). 4 helical membrane passes run 288–308 (FLGY…TINI), 343–363 (ISFI…LITL), 378–398 (VIVL…VLLI), and 425–445 (WFDV…YLAH).

The protein belongs to the Golgi pH regulator (TC 1.A.38) family. In terms of assembly, homotrimer. Interacts with RABL3; the interaction stabilizes GPR89.

It localises to the golgi apparatus membrane. The catalysed reaction is iodide(out) = iodide(in). The enzyme catalyses chloride(in) = chloride(out). It catalyses the reaction bromide(in) = bromide(out). It carries out the reaction fluoride(in) = fluoride(out). Its function is as follows. Voltage-gated channel that enables the transfer of monoatomic anions such as iodide, chloride, bromide and fluoride which may function in counter-ion conductance and participates in Golgi acidification. Plays a role in lymphocyte development, probably by acting as a RABL3 effector in hematopoietic cells. This is Golgi pH regulator from Mus musculus (Mouse).